The chain runs to 300 residues: MKQYLITGGTGMVGSQLVNEIKKSDSHITILTRHDQISNDKKISYVNWAKSGWEHKVPQNIDVVINLAGATLNKRWTPEYKQTLMLSRIQSTQALYELFKSRNKAPKVLFNASATGYYPPDLFMSYTEVYKTLPFDFLSDIVYQWERFAQQFEQLGTRVVIGRFGMILSNEGGALQTMKLPYKYYIGGKLGSGQQWYSWIHINDLIQAILFLINNESASGPFNLTAPIPERQNLFGYTLARAMHKPHETWAPSLAMRLILGQMSTVVLDTQKVLPNKIQALGFQFKYSNLKMALEDLIKE.

The protein belongs to the NAD(P)-dependent epimerase/dehydratase family. SDR39U1 subfamily.

This Staphylococcus aureus (strain Mu50 / ATCC 700699) protein is Epimerase family protein SAV0769.